Here is a 611-residue protein sequence, read N- to C-terminus: 4-hydroxy-3-methylbut-2-en-1-yl diphosphate synthase (flavodoxin) (611 aa).

Positions 520, 523, 554, and 561 each coordinate [4Fe-4S] cluster.

It belongs to the IspG family. It depends on [4Fe-4S] cluster as a cofactor.

The enzyme catalyses (2E)-4-hydroxy-3-methylbut-2-enyl diphosphate + oxidized [flavodoxin] + H2O + 2 H(+) = 2-C-methyl-D-erythritol 2,4-cyclic diphosphate + reduced [flavodoxin]. It functions in the pathway isoprenoid biosynthesis; isopentenyl diphosphate biosynthesis via DXP pathway; isopentenyl diphosphate from 1-deoxy-D-xylulose 5-phosphate: step 5/6. Converts 2C-methyl-D-erythritol 2,4-cyclodiphosphate (ME-2,4cPP) into 1-hydroxy-2-methyl-2-(E)-butenyl 4-diphosphate. The chain is 4-hydroxy-3-methylbut-2-en-1-yl diphosphate synthase (flavodoxin) from Parabacteroides distasonis (strain ATCC 8503 / DSM 20701 / CIP 104284 / JCM 5825 / NCTC 11152).